Consider the following 614-residue polypeptide: Probable pectinesterase/pectinesterase inhibitor 13 (614 aa).

A helical transmembrane segment spans residues 25–45 (IIVGTVSLLVVVAAIVGGAFA). The segment at 55–102 (QQQQQQQAKNHNKSGSGNNVVKDSDKKSPSPPTPSQKAPVSAAQSVKP) is disordered. N-linked (GlcNAc...) asparagine glycosylation is found at Asn66, Asn128, Asn197, Asn243, Asn301, Asn351, and Asn367. A pectinesterase inhibitor 13 region spans residues 103 to 255 (GQGDKIIQTL…QVLTSNSLAL (153 aa)). The pectinesterase 13 stretch occupies residues 301 to 598 (NATVAKDGSG…YTVGPFLQGD (298 aa)). Substrate-binding residues include Thr376 and Gln406. Catalysis depends on Asp429, which acts as the Proton donor; for pectinesterase activity. Cysteines 443 and 463 form a disulfide. The active-site Nucleophile; for pectinesterase activity is Asp450. Substrate is bound by residues Arg518 and Trp520. N-linked (GlcNAc...) asparagine glycosylation is found at Asn522 and Asn588.

In the N-terminal section; belongs to the PMEI family. The protein in the C-terminal section; belongs to the pectinesterase family. Expressed in flower buds.

It localises to the membrane. The catalysed reaction is [(1-&gt;4)-alpha-D-galacturonosyl methyl ester](n) + n H2O = [(1-&gt;4)-alpha-D-galacturonosyl](n) + n methanol + n H(+). It participates in glycan metabolism; pectin degradation; 2-dehydro-3-deoxy-D-gluconate from pectin: step 1/5. Its function is as follows. Acts in the modification of cell walls via demethylesterification of cell wall pectin. This is Probable pectinesterase/pectinesterase inhibitor 13 (PME13) from Arabidopsis thaliana (Mouse-ear cress).